Here is a 777-residue protein sequence, read N- to C-terminus: DNA repair helicase/translocase XPB-R (777 aa).

The region spanning 212 to 416 (AASDGALRSG…DLFHLVGPKL (205 aa)) is the Helicase ATP-binding domain. 225 to 232 (LPCGSGKT) provides a ligand contact to ATP. Residues 369–372 (DEVH) carry the DEVH box motif. The Helicase C-terminal domain occupies 484–631 (IVKRHVAESS…GYTCSVTEFN (148 aa)).

The protein belongs to the helicase family. RAD25/XPB subfamily.

It carries out the reaction Couples ATP hydrolysis with the unwinding of duplex DNA by translocating in the 3'-5' direction.. The catalysed reaction is ATP + H2O = ADP + phosphate + H(+). Functionally, ATP-dependent 3'-5' DNA helicase/translocase; binds dsDNA rather than ssDNA, unzipping it in a translocase rather than classical helicase activity. Involved in nucleotide excision repair (NER) of damaged DNA. XPB-R is a paralog of XBP, but is not a component of the TFIIH basal transcription factor and is dispensable for RNA polymerase II transcription. The chain is DNA repair helicase/translocase XPB-R from Trypanosoma brucei brucei (strain 927/4 GUTat10.1).